The primary structure comprises 377 residues: Nitric oxide reductase FlRd-NAD(+) reductase (377 aa).

The protein belongs to the FAD-dependent oxidoreductase family. Requires FAD as cofactor.

Its subcellular location is the cytoplasm. It carries out the reaction 2 reduced [nitric oxide reductase rubredoxin domain] + NAD(+) + H(+) = 2 oxidized [nitric oxide reductase rubredoxin domain] + NADH. Its pathway is nitrogen metabolism; nitric oxide reduction. One of at least two accessory proteins for anaerobic nitric oxide (NO) reductase. Reduces the rubredoxin moiety of NO reductase. In Escherichia coli O6:K15:H31 (strain 536 / UPEC), this protein is Nitric oxide reductase FlRd-NAD(+) reductase.